We begin with the raw amino-acid sequence, 233 residues long: Orotidine 5'-phosphate decarboxylase (233 aa).

Substrate contacts are provided by residues D11, K34, 61–70 (DLKLHDIPNT), T117, R179, Q189, G209, and R210. The active-site Proton donor is the K63.

Belongs to the OMP decarboxylase family. Type 1 subfamily. As to quaternary structure, homodimer.

The enzyme catalyses orotidine 5'-phosphate + H(+) = UMP + CO2. It participates in pyrimidine metabolism; UMP biosynthesis via de novo pathway; UMP from orotate: step 2/2. Functionally, catalyzes the decarboxylation of orotidine 5'-monophosphate (OMP) to uridine 5'-monophosphate (UMP). The sequence is that of Orotidine 5'-phosphate decarboxylase from Streptococcus agalactiae serotype Ia (strain ATCC 27591 / A909 / CDC SS700).